Consider the following 282-residue polypeptide: Succinate dehydrogenase [ubiquinone] iron-sulfur subunit, mitochondrial (282 aa).

A mitochondrion-targeting transit peptide spans 1-30 (MAATVGVSLKRGFPAAVLGRVGLQFQACRG). The 94-residue stretch at 42–135 (KKFAIYRWDP…VSKIYPLPHM (94 aa)) folds into the 2Fe-2S ferredoxin-type domain. N6-acetyllysine is present on residues K53 and K57. [2Fe-2S] cluster-binding residues include C95, C100, C103, and C115. The interaction with SDHAF1 stretch occupies residues 148 to 220 (FYAQYKSIEP…PAVLMQAYRW (73 aa)). The region spanning 178 to 208 (DREKLDGLYECILCACCSTSCPSYWWNGDKY) is the 4Fe-4S ferredoxin-type domain. 3 residues coordinate [4Fe-4S] cluster: C188, C191, and C194. C198 is a binding site for [3Fe-4S] cluster. W203 contributes to the a ubiquinone binding site. 2 residues coordinate [3Fe-4S] cluster: C245 and C251. C255 lines the [4Fe-4S] cluster pocket.

This sequence belongs to the succinate dehydrogenase/fumarate reductase iron-sulfur protein family. In terms of assembly, component of complex II composed of four subunits: the flavoprotein (FP) SDHA, iron-sulfur protein (IP) SDHB, and a cytochrome b560 composed of SDHC and SDHD. Interacts with SDHAF1; the interaction is required for iron-sulfur cluster incorporation into SDHB. Requires [2Fe-2S] cluster as cofactor. [3Fe-4S] cluster is required as a cofactor. The cofactor is [4Fe-4S] cluster.

Its subcellular location is the mitochondrion inner membrane. The enzyme catalyses a quinone + succinate = fumarate + a quinol. It catalyses the reaction (R)-malate + a quinone = enol-oxaloacetate + a quinol. It carries out the reaction (S)-malate + a quinone = enol-oxaloacetate + a quinol. Its pathway is carbohydrate metabolism; tricarboxylic acid cycle; fumarate from succinate (eukaryal route): step 1/1. Enol-oxaloacetate inhibits the succinate dehydrogenase activity. Iron-sulfur protein (IP) subunit of the succinate dehydrogenase complex (mitochondrial respiratory chain complex II), responsible for transferring electrons from succinate to ubiquinone (coenzyme Q). SDH also oxidizes malate to the non-canonical enol form of oxaloacetate, enol-oxaloacetate. Enol-oxaloacetate, which is a potent inhibitor of the succinate dehydrogenase activity, is further isomerized into keto-oxaloacetate. This Mus musculus (Mouse) protein is Succinate dehydrogenase [ubiquinone] iron-sulfur subunit, mitochondrial (Sdhb).